We begin with the raw amino-acid sequence, 189 residues long: Protein GrpE (189 aa).

A disordered region spans residues Met-1–Asp-24.

It belongs to the GrpE family. As to quaternary structure, homodimer.

The protein localises to the cytoplasm. Functionally, participates actively in the response to hyperosmotic and heat shock by preventing the aggregation of stress-denatured proteins, in association with DnaK and GrpE. It is the nucleotide exchange factor for DnaK and may function as a thermosensor. Unfolded proteins bind initially to DnaJ; upon interaction with the DnaJ-bound protein, DnaK hydrolyzes its bound ATP, resulting in the formation of a stable complex. GrpE releases ADP from DnaK; ATP binding to DnaK triggers the release of the substrate protein, thus completing the reaction cycle. Several rounds of ATP-dependent interactions between DnaJ, DnaK and GrpE are required for fully efficient folding. In Pseudomonas fluorescens (strain Pf0-1), this protein is Protein GrpE.